The sequence spans 512 residues: Methionine--tRNA ligase (512 aa).

A 'HIGH' region motif is present at residues 12–22; it reads YYVNDVPHIGH. The 'KMSKS' region motif lies at 295 to 299; that stretch reads KISKS. Residue K298 participates in ATP binding.

It belongs to the class-I aminoacyl-tRNA synthetase family. MetG type 2B subfamily. As to quaternary structure, monomer.

The protein resides in the cytoplasm. It catalyses the reaction tRNA(Met) + L-methionine + ATP = L-methionyl-tRNA(Met) + AMP + diphosphate. Is required not only for elongation of protein synthesis but also for the initiation of all mRNA translation through initiator tRNA(fMet) aminoacylation. In Rickettsia felis (strain ATCC VR-1525 / URRWXCal2) (Rickettsia azadi), this protein is Methionine--tRNA ligase.